A 333-amino-acid chain; its full sequence is tRNA dimethylallyltransferase (333 aa).

Residue 16–23 coordinates ATP; it reads GPTASGKT. 18–23 is a substrate binding site; it reads TASGKT. 3 interaction with substrate tRNA regions span residues 41-44, 165-169, and 253-258; these read DSAL, QRISR, and RCVGYR.

It belongs to the IPP transferase family. As to quaternary structure, monomer. Mg(2+) is required as a cofactor.

It carries out the reaction adenosine(37) in tRNA + dimethylallyl diphosphate = N(6)-dimethylallyladenosine(37) in tRNA + diphosphate. Catalyzes the transfer of a dimethylallyl group onto the adenine at position 37 in tRNAs that read codons beginning with uridine, leading to the formation of N6-(dimethylallyl)adenosine (i(6)A). This Polaromonas sp. (strain JS666 / ATCC BAA-500) protein is tRNA dimethylallyltransferase.